The chain runs to 205 residues: Small ribosomal subunit protein mS26 (205 aa).

The N-terminal 27 residues, 1 to 27 (MLRALSRLGAGTPCRPRAPLVLPARGR), are a transit peptide targeting the mitochondrion.

This sequence belongs to the mitochondrion-specific ribosomal protein mS26 family. Component of the mitochondrial small ribosomal subunit (mt-SSU). Mature mammalian 55S mitochondrial ribosomes consist of a small (28S) and a large (39S) subunit. The 28S small subunit contains a 12S ribosomal RNA (12S mt-rRNA) and 30 different proteins. The 39S large subunit contains a 16S rRNA (16S mt-rRNA), a copy of mitochondrial valine transfer RNA (mt-tRNA(Val)), which plays an integral structural role, and 52 different proteins.

Its subcellular location is the mitochondrion. The polypeptide is Small ribosomal subunit protein mS26 (MRPS26) (Homo sapiens (Human)).